Consider the following 762-residue polypeptide: Cell surface protein (762 aa).

Positions 1 to 26 (MKNLKKLIAVVSTFALVFSAMAVGFA) are cleaved as a signal peptide. SLH domains are found at residues 27–90 (ATTP…EMAK), 92–155 (EKSA…WPYG), and 156–204 (YLAK…KEVL). Residues Y297, Y516, Y520, and Y632 are each glycosylated (O-linked (Glc...) tyrosine).

Glycosylated; contains 8% carbohydrates, which correspond to about 40 to 50 sugar molecules per monomer. O-linked glycans consist of Glc, GalNAc and GlcNAc.

Its subcellular location is the secreted. It localises to the cell wall. The protein resides in the S-layer. The S-layer is a paracrystalline mono-layered assembly of proteins which coat the surface of bacteria. This chain is Cell surface protein, found in Thermoanaerobacter kivui (Acetogenium kivui).